Consider the following 53-residue polypeptide: Beta-defensin C7 (53 aa).

3 disulfide bridges follow: Cys20/Cys49, Cys27/Cys42, and Cys32/Cys50.

It belongs to the beta-defensin family.

It localises to the secreted. Has bactericidal activity. The polypeptide is Beta-defensin C7 (Bos taurus (Bovine)).